The following is a 118-amino-acid chain: NADH-quinone oxidoreductase subunit A 1 (118 aa).

3 helical membrane-spanning segments follow: residues 1-21, 60-80, and 87-107; these read MLGV…FGLA, FYII…MYPW, and LGIF…VGYI.

It belongs to the complex I subunit 3 family. As to quaternary structure, NDH-1 is composed of 14 different subunits. Subunits NuoA, H, J, K, L, M, N constitute the membrane sector of the complex.

The protein resides in the cell inner membrane. It carries out the reaction a quinone + NADH + 5 H(+)(in) = a quinol + NAD(+) + 4 H(+)(out). In terms of biological role, NDH-1 shuttles electrons from NADH, via FMN and iron-sulfur (Fe-S) centers, to quinones in the respiratory chain. The immediate electron acceptor for the enzyme in this species is believed to be ubiquinone. Couples the redox reaction to proton translocation (for every two electrons transferred, four hydrogen ions are translocated across the cytoplasmic membrane), and thus conserves the redox energy in a proton gradient. This chain is NADH-quinone oxidoreductase subunit A 1, found in Geobacter sulfurreducens (strain ATCC 51573 / DSM 12127 / PCA).